A 135-amino-acid chain; its full sequence is Crossover junction endodeoxyribonuclease Hje (135 aa).

Residues E10, D39, and E52 each coordinate Mg(2+).

It belongs to the Holliday junction resolvase Hjc family. Hje subfamily. As to quaternary structure, homodimer. Requires Mg(2+) as cofactor.

It catalyses the reaction Endonucleolytic cleavage at a junction such as a reciprocal single-stranded crossover between two homologous DNA duplexes (Holliday junction).. Functionally, a structure-specific endonuclease that resolves Holliday junction (HJ) intermediates during genetic recombination. Acts only on 4-way DNA junctions in a sequence non-specific manner; introduces paired nicks in opposing strands 2 bases 3' of the point of strand exchange only on continuous strands of 4-way junction DNA. Cleaves both mobile and immobile junctions. Plays a more direct role in DNA repair than Hjc. Overexpression of this protein decreases the growth rate, and leads to genomic instability, and global transcriptomic changes. This Saccharolobus islandicus (strain REY15A) (Sulfolobus islandicus) protein is Crossover junction endodeoxyribonuclease Hje.